Here is a 587-residue protein sequence, read N- to C-terminus: Beta-(1--&gt;2)glucan export ATP-binding/permease protein NdvA (587 aa).

The ABC transmembrane type-1 domain occupies 21–301; the sequence is VSLVVVANIV…MRQFATQIFE (281 aa). Transmembrane regions (helical) follow at residues 23–43, 57–77, 128–148, 158–178, 248–268, and 272–292; these read LVVV…ILFG, PILF…VLVA, GLWL…ALLI, LSAV…VVMS, MAST…VQAG, and VGDV…LDLM. Residues 335–569 enclose the ABC transporter domain; that stretch reads IEFRDVSFGF…NGRFAALLRA (235 aa). ATP is bound at residue 368-375; sequence GPTGAGKT.

It belongs to the ABC transporter superfamily. Beta-(1--&gt;2)glucan exporter (TC 3.A.1.108.1) family. Homodimer.

The protein localises to the cell inner membrane. It carries out the reaction [(1-&gt;2)-beta-D-glucosyl](n)(in) + ATP + H2O = [(1-&gt;2)-beta-D-glucosyl](n)(out) + ADP + phosphate + H(+). Its function is as follows. Involved in beta-(1--&gt;2)glucan export. Transmembrane domains (TMD) form a pore in the inner membrane and the ATP-binding domain (NBD) is responsible for energy generation. The polypeptide is Beta-(1--&gt;2)glucan export ATP-binding/permease protein NdvA (Rhizobium johnstonii (strain DSM 114642 / LMG 32736 / 3841) (Rhizobium leguminosarum bv. viciae)).